The following is a 528-amino-acid chain: GMP synthase [glutamine-hydrolyzing] (528 aa).

In terms of domain architecture, Glutamine amidotransferase type-1 spans 13 to 203; sequence TVLVVDFGAQ…LYEAAGCRPT (191 aa). The active-site Nucleophile is the C90. Active-site residues include H177 and E179. A GMPS ATP-PPase domain is found at 204 to 402; the sequence is WTMVNIVEDQ…LGLPAEMVWR (199 aa). Position 231 to 237 (231 to 237) interacts with ATP; the sequence is SGGVDSA.

In terms of assembly, homodimer.

It catalyses the reaction XMP + L-glutamine + ATP + H2O = GMP + L-glutamate + AMP + diphosphate + 2 H(+). Its pathway is purine metabolism; GMP biosynthesis; GMP from XMP (L-Gln route): step 1/1. Catalyzes the synthesis of GMP from XMP. This is GMP synthase [glutamine-hydrolyzing] from Thermobifida fusca (strain YX).